Reading from the N-terminus, the 313-residue chain is Pyrimidine-specific ribonucleoside hydrolase RihB (313 aa).

Asp-11 (proton acceptor) is an active-site residue. Ca(2+)-binding residues include Asp-11, Asp-16, and Val-124. Substrate contacts are provided by Gln-227 and His-239. Asp-240 lines the Ca(2+) pocket.

The protein belongs to the IUNH family. RihB subfamily. In terms of assembly, homotetramer. It depends on Ca(2+) as a cofactor.

The enzyme catalyses a pyrimidine ribonucleoside + H2O = a pyrimidine nucleobase + D-ribose. In terms of biological role, hydrolyzes cytidine or uridine to ribose and cytosine or uracil, respectively. Has a clear preference for cytidine over uridine. Strictly specific for ribonucleosides. The polypeptide is Pyrimidine-specific ribonucleoside hydrolase RihB (Escherichia coli O1:K1 / APEC).